A 315-amino-acid chain; its full sequence is Glutaminase (315 aa).

7 residues coordinate substrate: serine 70, asparagine 120, glutamate 166, asparagine 173, tyrosine 197, tyrosine 249, and valine 267.

The protein belongs to the glutaminase family. Homotetramer.

The catalysed reaction is L-glutamine + H2O = L-glutamate + NH4(+). The sequence is that of Glutaminase from Rhizobium meliloti (strain 1021) (Ensifer meliloti).